A 243-amino-acid chain; its full sequence is Venom nerve growth factor (243 aa).

Positions 1 to 18 are cleaved as a signal peptide; sequence MSMLCYTLIIVFLIGIWA. Positions 19-125 are excised as a propeptide; sequence APKSEDNVPL…TLNRNIRAKR (107 aa). A compositionally biased stretch (basic and acidic residues) spans 47-66; sequence GLKTSRNTDQRHPAPKKAED. Residues 47-69 form a disordered region; that stretch reads GLKTSRNTDQRHPAPKKAEDQEL. Disulfide bonds link Cys139-Cys204, Cys182-Cys232, and Cys192-Cys234. A glycan (N-linked (GlcNAc...) asparagine) is linked at Asn148.

The protein belongs to the NGF-beta family. In terms of assembly, homodimer; non-covalently linked. In terms of tissue distribution, expressed by the venom gland.

It localises to the secreted. In terms of biological role, nerve growth factor is important for the development and maintenance of the sympathetic and sensory nervous systems. It stimulates division and differentiation of sympathetic and embryonic sensory neurons as well as basal forebrain cholinergic neurons in the brain. Its relevance in the snake venom is not clear. However, it has been shown to inhibit metalloproteinase-dependent proteolysis of platelet glycoprotein Ib alpha, suggesting a metalloproteinase inhibition to prevent metalloprotease autodigestion and/or protection against prey proteases. Binds a lipid between the two protein chains in the homodimer. The lipid-bound form promotes histamine relase from mouse mast cells, contrary to the lipid-free form. The polypeptide is Venom nerve growth factor (Oxyuranus scutellatus scutellatus (Australian taipan)).